We begin with the raw amino-acid sequence, 151 residues long: Acidic phospholipase A2 1 (151 aa).

A signal peptide spans 1-21 (MNPAHLLVLSAVCVSLLGASS). Positions 22–27 (IPPQPL) are excised as a propeptide. Intrachain disulfides connect cysteine 38-cysteine 104, cysteine 54-cysteine 151, cysteine 56-cysteine 72, cysteine 71-cysteine 132, cysteine 78-cysteine 125, cysteine 88-cysteine 118, and cysteine 111-cysteine 123. Ca(2+) is bound by residues tyrosine 55, glycine 57, and glycine 59. Histidine 75 is a catalytic residue. Aspartate 76 contributes to the Ca(2+) binding site. Aspartate 126 is a catalytic residue.

Ca(2+) serves as cofactor. As to expression, expressed by the venom gland.

Its subcellular location is the secreted. It catalyses the reaction a 1,2-diacyl-sn-glycero-3-phosphocholine + H2O = a 1-acyl-sn-glycero-3-phosphocholine + a fatty acid + H(+). Functionally, snake venom phospholipase A2 (PLA2) that may exhibit cardiotoxicity, myotoxicity, antiplatelet activity, and edema-inducing activity. PLA2 catalyzes the calcium-dependent hydrolysis of the 2-acyl groups in 3-sn-phosphoglycerides. This chain is Acidic phospholipase A2 1, found in Ophiophagus hannah (King cobra).